A 214-amino-acid chain; its full sequence is Orotate phosphoribosyltransferase (214 aa).

Lys-26 is a 5-phospho-alpha-D-ribose 1-diphosphate binding site. 34 to 35 (FF) serves as a coordination point for orotate. 5-phospho-alpha-D-ribose 1-diphosphate contacts are provided by residues 72–73 (YK), Arg-99, Lys-100, Lys-103, His-105, and 124–132 (DDVITAGTA). Residues Thr-128 and Arg-156 each coordinate orotate.

Belongs to the purine/pyrimidine phosphoribosyltransferase family. PyrE subfamily. Homodimer. It depends on Mg(2+) as a cofactor.

It carries out the reaction orotidine 5'-phosphate + diphosphate = orotate + 5-phospho-alpha-D-ribose 1-diphosphate. It functions in the pathway pyrimidine metabolism; UMP biosynthesis via de novo pathway; UMP from orotate: step 1/2. Its function is as follows. Catalyzes the transfer of a ribosyl phosphate group from 5-phosphoribose 1-diphosphate to orotate, leading to the formation of orotidine monophosphate (OMP). The chain is Orotate phosphoribosyltransferase from Mannheimia succiniciproducens (strain KCTC 0769BP / MBEL55E).